A 155-amino-acid polypeptide reads, in one-letter code: SsrA-binding protein (155 aa).

It belongs to the SmpB family.

It localises to the cytoplasm. Required for rescue of stalled ribosomes mediated by trans-translation. Binds to transfer-messenger RNA (tmRNA), required for stable association of tmRNA with ribosomes. tmRNA and SmpB together mimic tRNA shape, replacing the anticodon stem-loop with SmpB. tmRNA is encoded by the ssrA gene; the 2 termini fold to resemble tRNA(Ala) and it encodes a 'tag peptide', a short internal open reading frame. During trans-translation Ala-aminoacylated tmRNA acts like a tRNA, entering the A-site of stalled ribosomes, displacing the stalled mRNA. The ribosome then switches to translate the ORF on the tmRNA; the nascent peptide is terminated with the 'tag peptide' encoded by the tmRNA and targeted for degradation. The ribosome is freed to recommence translation, which seems to be the essential function of trans-translation. The polypeptide is SsrA-binding protein (Bordetella parapertussis (strain 12822 / ATCC BAA-587 / NCTC 13253)).